We begin with the raw amino-acid sequence, 346 residues long: Ribonucleoside-diphosphate reductase subunit beta (346 aa).

Positions 89, 120, and 123 each coordinate Fe cation. Y129 is a catalytic residue. Residues E193, E227, and H230 each contribute to the Fe cation site.

It belongs to the ribonucleoside diphosphate reductase small chain family. In terms of assembly, tetramer of two alpha and two beta subunits. Requires Fe cation as cofactor.

It carries out the reaction a 2'-deoxyribonucleoside 5'-diphosphate + [thioredoxin]-disulfide + H2O = a ribonucleoside 5'-diphosphate + [thioredoxin]-dithiol. In terms of biological role, provides the precursors necessary for DNA synthesis. Catalyzes the biosynthesis of deoxyribonucleotides from the corresponding ribonucleotides. The sequence is that of Ribonucleoside-diphosphate reductase subunit beta (nrdB) from Chlamydia trachomatis serovar D (strain ATCC VR-885 / DSM 19411 / UW-3/Cx).